Here is a 4576-residue protein sequence, read N- to C-terminus: Mucin-2 (4576 aa).

A signal peptide spans 1-20; sequence MGLPLARLVAACLVLALAKG. Ser-21 carries the post-translational modification Phosphoserine. A VWFD 1 domain is found at 32–205; sequence HVCSTWGDFH…KINKPEVQCE (174 aa). Disulfide bonds link Cys-34-Cys-166, Cys-56-Cys-204, Cys-64-Cys-163, Cys-216-Cys-253, Cys-223-Cys-248, Cys-235-Cys-273, Cys-255-Cys-261, Cys-263-Cys-289, Cys-293-Cys-327, Cys-306-Cys-319, Cys-310-Cys-349, Cys-329-Cys-343, Cys-351-Cys-373, Cys-368-Cys-385, Cys-371-Cys-380, Cys-389-Cys-526, Cys-411-Cys-561, Cys-433-Cys-441, Cys-572-Cys-617, Cys-586-Cys-612, Cys-599-Cys-637, Cys-619-Cys-625, Cys-627-Cys-652, Cys-659-Cys-696, Cys-672-Cys-686, Cys-676-Cys-716, Cys-698-Cys-710, Cys-718-Cys-740, and Cys-738-Cys-747. Asp-46 is a binding site for Ca(2+). 2 residues coordinate Cu(+): Met-143 and Met-151. Glu-153 lines the Cu(2+) pocket. Residue Asn-160 is glycosylated (N-linked (GlcNAc...) asparagine). Ca(2+)-binding residues include Asp-168, Asn-170, and Glu-177. A Cu(2+)-binding site is contributed by His-275. Positions 293 to 349 constitute a TIL domain; the sequence is CPNNMVYLESSSPCVDTCSHLEVSSLCEEHYMDGCFCPEGTVYDDITGSGCIPVSQC. Position 322 (His-322) interacts with Cu(2+). Met-324 contacts Cu(+). The VWFD 2 domain maps to 387 to 562; it reads ETCALEGGSH…NTWKAQSSCH (176 aa). Asp-401 serves as a coordination point for Ca(2+). N-linked (GlcNAc...) asparagine glycosylation occurs at Asn-421. Ca(2+) is bound by residues Asn-528, Asn-530, Leu-532, Asp-535, and Asp-536. Asn-668 carries N-linked (GlcNAc...) asparagine glycosylation. Asn-768 is a glycosylation site (N-linked (GlcNAc...) asparagine). Intrachain disulfides connect Cys-782–Cys-818, Cys-800–Cys-812, Cys-820–Cys-843, Cys-837–Cys-855, Cys-841–Cys-850, Cys-859–Cys-990, Cys-881–Cys-1025, Cys-890–Cys-987, Cys-907–Cys-914, Cys-1035–Cys-1078, Cys-1049–Cys-1073, Cys-1060–Cys-1100, Cys-1080–Cys-1088, Cys-1090–Cys-1115, Cys-1106–Cys-1135, Cys-1119–Cys-1161, Cys-1143–Cys-1185, Cys-1165–Cys-1179, Cys-1187–Cys-1211, Cys-1206–Cys-1236, and Cys-1209–Cys-1219. A glycan (N-linked (GlcNAc...) asparagine) is linked at Asn-838. The VWFD 3 domain maps to 857 to 1026; it reads STCSIYGSGH…NSWKEASTCP (170 aa). Position 871 (Asp-871) interacts with Ca(2+). N-linked (GlcNAc...) asparagine glycosylation occurs at Asn-893. Residues Asn-992, Asp-994, Asn-999, and Asp-1000 each coordinate Ca(2+). Residues Asn-1137 and Asn-1152 are each glycosylated (N-linked (GlcNAc...) asparagine). N-linked (GlcNAc...) asparagine glycosylation is found at Asn-1213, Asn-1228, and Asn-1244. O-linked (GalNAc) threonine glycosylation is found at Thr-1265, Thr-1268, Thr-1269, Thr-1281, and Thr-1292. 5 residues coordinate Ca(2+): Asn-1305, His-1308, Gly-1315, Asp-1316, and Glu-1318. Asn-1352 is a glycosylation site (N-linked (GlcNAc...) asparagine). Positions 1375 and 1376 each coordinate Ca(2+). Tandem repeats lie at residues 1395–1415, 1416–1427, 1428–1437, 1438–1453, and 1454–1460. A disordered region spans residues 1395–2866; the sequence is SPTTSTTTLS…PTTSSTFTTP (1472 aa). One copy of the 7B repeat lies at 1478 to 1497; the sequence is PSTTSPTTPSTTPSTTSPTT. The 8A repeat unit spans residues 1498–1510; it reads PSTTSPTTPTSTS. Residues 1530–1556 form a 9B repeat; that stretch reads SPTTSPTTPSTTSPTISTTTSTISPTT. The 10A repeat unit spans residues 1557–1572; the sequence is PSTTSPNTPSTTSSTI. The 10B repeat unit spans residues 1573–1588; sequence PSTTSPTTPSTTSPTI. The 11A repeat unit spans residues 1589–1607; that stretch reads STTTSTTSPTTPSTTSPTT. Residues 1608–1634 form an 11B repeat; the sequence is PSTTSPTTPSTTSPTISTTTLTTSPTT. 2 consecutive repeat copies span residues 1635–1642 and 1665–1681. 2 N-linked (GlcNAc...) asparagine glycosylation sites follow: Asn-2529 and Asn-2910. Low complexity-rich tracts occupy residues 2975–3623 and 3631–3706; these read PSST…GSTP and PGPT…TSPS. The segment at 2975–3706 is disordered; that stretch reads PSSTTTETPT…SSTSPITSPS (732 aa). Asn-3734, Asn-3745, and Asn-3756 each carry an N-linked (GlcNAc...) asparagine glycan. Residues 3764-3774 are compositionally biased toward pro residues; the sequence is STPTPSTPTPT. The interval 3764 to 3806 is disordered; it reads STPTPSTPTPTPSQTTTPSTTSSKSTPSTPQSTSPKSTLSTPT. Over residues 3775 to 3806 the composition is skewed to low complexity; it reads PSQTTTPSTTSSKSTPSTPQSTSPKSTLSTPT. Asn-3823, Asn-3830, and Asn-3903 each carry an N-linked (GlcNAc...) asparagine glycan. Residues 3880–4063 form the VWFD 4 domain; that stretch reads CYCTGWGDPH…VNDPSKPHCP (184 aa). Intrachain disulfides connect Cys-3882–Cys-4023, Cys-3904–Cys-4062, and Cys-3928–Cys-3936. N-linked (GlcNAc...) asparagine glycosylation is found at Asn-3991, Asn-4017, Asn-4028, Asn-4083, Asn-4149, Asn-4183, Asn-4254, Asn-4277, Asn-4351, Asn-4366, Asn-4434, Asn-4465, and Asn-4488. 2 VWFC domains span residues 4213–4282 and 4320–4387; these read CVGP…TSCK and GVCV…KKCQ. Intrachain disulfides connect Cys-4471–Cys-4518, Cys-4485–Cys-4532, Cys-4494–Cys-4548, and Cys-4498–Cys-4550. A CTCK domain is found at 4471-4556; it reads CSAVSVMKEI…SCLCQDTVCG (86 aa).

As to quaternary structure, homomultimer; disulfide-linked. The N- and C-terminus mediate their assembly into higher order structures to form filaments. The CTCK domains of two polypeptides associate in the endoplasmic reticulum to generate intermolecularly disulfide-bonded dimers. These dimers progress to the Golgi apparatus, which is a more acidic environment than the endoplasmic reticulum. Under acidic conditions, the N-termini form non-covalent intermolecular interactions that juxtapose assemblies of the third VWD domain (VWD3) from different CTCK-linked dimers. The VWD3 assemblies then become disulfide bonded to one another to produce long, disulfide-linked polymers that remain highly compact until secretion. Interacts with FCGBP. Interacts with AGR2; disulfide-linked. O-glycosylated. O-glycosylation is required for mucin assembly. Goblet cells synthesize two forms of mucin that differ in branched chain O-glycosylation and the site of production in the colon. Post-translationally, may undergo proteolytic cleavage in the outer mucus layer of the colon, contributing to the expanded volume and loose nature of this layer which allows for bacterial colonization in contrast to the inner mucus layer which is dense and devoid of bacteria. In terms of processing, at low pH of 6 and under, undergoes autocatalytic cleavage in vitro in the N-terminal region of the fourth VWD domain. It is likely that this also occurs in vivo and is triggered by the low pH of the late secretory pathway. As to expression, highly expressed in goblet cells of the colon with lower levels in the small intestine and no expression in the stomach (at protein level).

The protein localises to the secreted. Coats the epithelia of the intestines and other mucus membrane-containing organs to provide a protective, lubricating barrier against particles and infectious agents at mucosal surfaces. Major constituent of the colon mucus, which is mainly formed by large polymeric networks of MUC2 secreted by goblet cells that cover the exposed surfaces of intestine. MUC2 networks form hydrogels that guard the underlying epithelium from pathogens and other hazardous matter entering from the outside world, while permitting nutrient absorption and gas exchange. Acts as a divalent copper chaperone that protects intestinal cells from copper toxicity and facilitates nutritional copper unptake into cells. Binds both Cu(2+) and its reduced form, Cu(1+), at two juxtaposed binding sites: Cu(2+), once reduced to Cu(1+) by vitamin C (ascorbate) or other dietary antioxidants, transits to the other binding site. MUC2-bound Cu(1+) is protected from oxidation in aerobic environments, and can be released for nutritional delivery to cells. Mucin gels store antimicrobial molecules that participate in innate immunity. Mucin glycoproteins also house and feed the microbiome, lubricate tissue surfaces, and may facilitate the removal of contaminants and waste products from the body. Goblet cells synthesize two forms of MUC2 mucin that differ in branched chain O-glycosylation and the site of production in the colon: a (1) 'thick' mucus that wraps the microbiota to form fecal pellets is produced in the proximal, ascending colon. 'Thick' mucus transits along the descending colon and is lubricated by a (2) 'thin' MUC2 mucus produced in the distal colon which adheres to the 'thick' mucus. This Mus musculus (Mouse) protein is Mucin-2.